A 125-amino-acid polypeptide reads, in one-letter code: Calcitonin receptor-stimulating peptide 1 (125 aa).

Residues 1–25 (MGFWKFPPFLVLSILVLYQAGMFHA) form the signal peptide. A propeptide spanning residues 26-77 (APFRSVFDGRFDPATLDEEESRLLLAAMVNDYEQMRARESEKAQKTEGSRIQ) is cleaved from the precursor. Residues Cys-81 and Cys-86 are joined by a disulfide bond.

This sequence belongs to the calcitonin family.

It is found in the secreted. Its function is as follows. Stimulates cAMP production in porcine kidney cell line LLC-PK1 via the calcitonin receptor (CT) but not via the CT-like (CL) receptor. The chain is Calcitonin receptor-stimulating peptide 1 (CRSP1) from Capra hircus (Goat).